A 363-amino-acid chain; its full sequence is D(1) dopamine receptor (363 aa).

Over 1–24 (MAVLDLNLTTVIDSGFMESDRSVR) the chain is Extracellular. The N-linked (GlcNAc...) asparagine glycan is linked to asparagine 7. Residues 25–45 (VLTGCFLSVLILSTLLGNTLV) form a helical membrane-spanning segment. At 46–61 (CAAVTKFRHLRSKVTN) the chain is on the cytoplasmic side. A helical transmembrane segment spans residues 62–81 (FFVISLAVSDLLVAVLVMPW). The Extracellular portion of the chain corresponds to 82–98 (KAVTEVAGFWPFGAFCD). A disulfide bridge connects residues cysteine 97 and cysteine 187. A helical membrane pass occupies residues 99–120 (IWVAFDIMCSTASILNLCVISV). Topologically, residues 121–139 (DRYWAISSPFRYERKMTPR) are cytoplasmic. A helical transmembrane segment spans residues 140–164 (VAFVMISGAWTLSVLISFIPVQLKW). Topologically, residues 165–194 (HKAQPIGFLEVNASRRDLPTDNCDSSLNRT) are extracellular. The helical transmembrane segment at 195–219 (YAISSSLISFYIPVAIMIVTYTQIY) threads the bilayer. Residues 220–271 (RIAQKQIRRISALERAAESAQIRHDSMGSGSNMDLESSFKLSFKRETKVLKT) are Cytoplasmic-facing. A helical membrane pass occupies residues 272–297 (LSVIMGVFVCCWLPFFILNCMVPFCK). Over 298 to 310 (RTSNGLPCISPTT) the chain is Extracellular. A helical membrane pass occupies residues 311 to 330 (FDVFVWFGWANSSLNPIIYA). Over 331–363 (FNADFRRAFAILLGCQRLCPGSISMETPSLNKN) the chain is Cytoplasmic. A lipid anchor (S-palmitoyl cysteine) is attached at cysteine 345.

It belongs to the G-protein coupled receptor 1 family. Retina.

The protein resides in the cell membrane. Its subcellular location is the cell projection. The protein localises to the cilium membrane. Its function is as follows. Dopamine receptor whose activity is mediated by G proteins which activate adenylyl cyclase. Could be involved in growth hormone release. The chain is D(1) dopamine receptor from Carassius auratus (Goldfish).